The chain runs to 161 residues: Lipid droplet assembly factor 1 (161 aa).

Topologically, residues 1-43 (MAKEEPQSISRDLQELQKKLSLLIDSFQNNSKVVAFMKSPVGQ) are cytoplasmic. Residues 44-61 (YLDSHPFLAFTLLVFIVM) traverse the membrane as a helical segment. The Lumenal portion of the chain corresponds to 62-67 (SAVPVG). Residues 68-87 (FFLLIVVLTTLAALLGVIIL) form a helical membrane-spanning segment. Over 88–93 (EGLVIS) the chain is Cytoplasmic. Residues 94-110 (VGGFSLLCILCGLGFVS) traverse the membrane as a helical segment. Residues 111-116 (LAMSGM) are Lumenal-facing. A helical membrane pass occupies residues 117–133 (MIASYVVVSSLISCWFS). At 134–161 (PRPLTQQNTSCDFLPAMKSAEFEGLYQE) the chain is on the cytoplasmic side.

The protein belongs to the LDAF1 family. In terms of assembly, interacts with isoform 1 and isoform 3 of BSCL2/seipin to form an oligomeric complex. Expressed at high levels in the heart and skeletal muscle. Expressed at low levels in kidney, small intestine, lung and liver.

The protein resides in the endoplasmic reticulum membrane. The protein localises to the lipid droplet. In terms of biological role, plays an important role in the formation of lipid droplets (LD) which are storage organelles at the center of lipid and energy homeostasis. In association with BSCL2/seipin, defines the sites of LD formation in the endoplasmic reticulum. In Homo sapiens (Human), this protein is Lipid droplet assembly factor 1.